A 645-amino-acid polypeptide reads, in one-letter code: Acetyl-coenzyme A synthetase (645 aa).

Residues 190–193 (RGGR), Thr309, and Asn333 contribute to the CoA site. ATP is bound by residues 385–387 (GEP), 409–414 (DTWWQT), Asp498, and Arg513. Ser521 contacts CoA. Arg524 is an ATP binding site. Residues Val535, His537, and Val540 each contribute to the Mg(2+) site. Arg582 is a binding site for CoA. The residue at position 607 (Lys607) is an N6-acetyllysine.

This sequence belongs to the ATP-dependent AMP-binding enzyme family. Requires Mg(2+) as cofactor. Post-translationally, acetylated. Deacetylation by the SIR2-homolog deacetylase activates the enzyme.

The catalysed reaction is acetate + ATP + CoA = acetyl-CoA + AMP + diphosphate. Catalyzes the conversion of acetate into acetyl-CoA (AcCoA), an essential intermediate at the junction of anabolic and catabolic pathways. AcsA undergoes a two-step reaction. In the first half reaction, AcsA combines acetate with ATP to form acetyl-adenylate (AcAMP) intermediate. In the second half reaction, it can then transfer the acetyl group from AcAMP to the sulfhydryl group of CoA, forming the product AcCoA. In Beijerinckia indica subsp. indica (strain ATCC 9039 / DSM 1715 / NCIMB 8712), this protein is Acetyl-coenzyme A synthetase.